A 562-amino-acid chain; its full sequence is Pentatricopeptide repeat-containing protein At3g22670, mitochondrial (562 aa).

Residues 1–31 (MLTKLRISKLVSYTLPRRIFQRRFLVTNNTA) constitute a mitochondrion transit peptide. PPR repeat units lie at residues 165–199 (SGHTYNAMVDVLGKCRNFDLMWELVNEMNKNEESK), 202–232 (TLDTMSKVMRRLAKSGKYNKAVDAFLEMEKS), 238–268 (DTIAMNSLMDALVKENSIEHAHEVFLKLFDT), 272–306 (DARTFNILIHGFCKARKFDDARAMMDLMKVTEFTP), 307–341 (DVVTYTSFVEAYCKEGDFRRVNEMLEEMRENGCNP), 342–376 (NVVTYTIVMHSLGKSKQVAEALGVYEKMKEDGCVP), 377–411 (DAKFYSSLIHILSKTGRFKDAAEIFEDMTNQGVRR), 412–446 (DVLVYNTMISAALHHSRDEMALRLLKRMEDEEGES), 450–484 (NVETYAPLLKMCCHKKKMKLLGILLHHMVKNDVSI), and 485–519 (DVSTYILLIRGLCMSGKVEEACLFFEEAVRKGMVP).

This sequence belongs to the PPR family. P subfamily.

It is found in the mitochondrion. The sequence is that of Pentatricopeptide repeat-containing protein At3g22670, mitochondrial from Arabidopsis thaliana (Mouse-ear cress).